The following is a 385-amino-acid chain: Chaperone protein DnaJ (385 aa).

The region spanning D5–G70 is the J domain. The segment at G136–E213 adopts a CR-type zinc-finger fold. 8 residues coordinate Zn(2+): C149, C152, C165, C168, C187, C190, C201, and C204. CXXCXGXG motif repeat units follow at residues C149–G156, C165–G172, C187–G194, and C201–G208.

The protein belongs to the DnaJ family. As to quaternary structure, homodimer. Zn(2+) is required as a cofactor.

It is found in the cytoplasm. In terms of biological role, participates actively in the response to hyperosmotic and heat shock by preventing the aggregation of stress-denatured proteins and by disaggregating proteins, also in an autonomous, DnaK-independent fashion. Unfolded proteins bind initially to DnaJ; upon interaction with the DnaJ-bound protein, DnaK hydrolyzes its bound ATP, resulting in the formation of a stable complex. GrpE releases ADP from DnaK; ATP binding to DnaK triggers the release of the substrate protein, thus completing the reaction cycle. Several rounds of ATP-dependent interactions between DnaJ, DnaK and GrpE are required for fully efficient folding. Also involved, together with DnaK and GrpE, in the DNA replication of plasmids through activation of initiation proteins. This Helicobacter hepaticus (strain ATCC 51449 / 3B1) protein is Chaperone protein DnaJ.